We begin with the raw amino-acid sequence, 193 residues long: dTTP/UTP pyrophosphatase (193 aa).

Catalysis depends on Asp-71, which acts as the Proton acceptor.

This sequence belongs to the Maf family. YhdE subfamily. A divalent metal cation serves as cofactor.

Its subcellular location is the cytoplasm. The catalysed reaction is dTTP + H2O = dTMP + diphosphate + H(+). It catalyses the reaction UTP + H2O = UMP + diphosphate + H(+). In terms of biological role, nucleoside triphosphate pyrophosphatase that hydrolyzes dTTP and UTP. May have a dual role in cell division arrest and in preventing the incorporation of modified nucleotides into cellular nucleic acids. The polypeptide is dTTP/UTP pyrophosphatase (Dictyoglomus turgidum (strain DSM 6724 / Z-1310)).